We begin with the raw amino-acid sequence, 207 residues long: Flavin-dependent thymidylate synthase (207 aa).

One can recognise a ThyX domain in the interval 1 to 204; the sequence is MQITLLFHTP…KFIFEHCLHK (204 aa). FAD-binding positions include Ser50 and 74–76; that span reads RHR. DUMP-binding positions include 71–74, 84–86, and Lys143; these read EVAR and STR. Residues 74 to 84 carry the ThyX motif motif; sequence RHRHTSPSVKS. FAD-binding positions include 159–161 and Asn165; that span reads NAR. Arg170 lines the dUMP pocket. Arg170 (involved in ionization of N3 of dUMP, leading to its activation) is an active-site residue.

This sequence belongs to the thymidylate synthase ThyX family. Homotetramer. It depends on FAD as a cofactor.

The enzyme catalyses dUMP + (6R)-5,10-methylene-5,6,7,8-tetrahydrofolate + NADPH + H(+) = dTMP + (6S)-5,6,7,8-tetrahydrofolate + NADP(+). It functions in the pathway pyrimidine metabolism; dTTP biosynthesis. Functionally, catalyzes the reductive methylation of 2'-deoxyuridine-5'-monophosphate (dUMP) to 2'-deoxythymidine-5'-monophosphate (dTMP) while utilizing 5,10-methylenetetrahydrofolate (mTHF) as the methyl donor, and NADPH and FADH(2) as the reductant. The protein is Flavin-dependent thymidylate synthase of Campylobacter jejuni subsp. jejuni serotype O:2 (strain ATCC 700819 / NCTC 11168).